Here is a 262-residue protein sequence, read N- to C-terminus: tRNA pseudouridine synthase A (262 aa).

The Nucleophile role is filled by aspartate 52. Tyrosine 103 contacts substrate.

Belongs to the tRNA pseudouridine synthase TruA family.

The catalysed reaction is uridine(38/39/40) in tRNA = pseudouridine(38/39/40) in tRNA. In terms of biological role, formation of pseudouridine at positions 38, 39 and 40 in the anticodon stem and loop of transfer RNAs. The chain is tRNA pseudouridine synthase A from Methanococcus maripaludis (strain C6 / ATCC BAA-1332).